Consider the following 719-residue polypeptide: DNA ligase (719 aa).

NAD(+) is bound by residues Asp42 to Asp46, Ser92 to Leu93, and Glu126. Lys128 functions as the N6-AMP-lysine intermediate in the catalytic mechanism. Arg149, Glu185, Lys301, and Lys325 together coordinate NAD(+). The Zn(2+) site is built by Cys430, Cys433, Cys448, and Cys454. The region spanning Ala640 to Asp719 is the BRCT domain.

This sequence belongs to the NAD-dependent DNA ligase family. LigA subfamily. Mg(2+) is required as a cofactor. Mn(2+) serves as cofactor.

The enzyme catalyses NAD(+) + (deoxyribonucleotide)n-3'-hydroxyl + 5'-phospho-(deoxyribonucleotide)m = (deoxyribonucleotide)n+m + AMP + beta-nicotinamide D-nucleotide.. DNA ligase that catalyzes the formation of phosphodiester linkages between 5'-phosphoryl and 3'-hydroxyl groups in double-stranded DNA using NAD as a coenzyme and as the energy source for the reaction. It is essential for DNA replication and repair of damaged DNA. This chain is DNA ligase, found in Brucella melitensis biotype 2 (strain ATCC 23457).